A 41-amino-acid chain; its full sequence is Diuretic hormone 1 (41 aa).

Isoleucine 41 carries the post-translational modification Isoleucine amide.

It localises to the secreted. Functionally, regulation of fluid secretion. May stimulate primary urine secretion by Malpighian tubules and causes a dose-dependent stimulation of cAMP levels in the tubules. The chain is Diuretic hormone 1 from Hyles lineata (White-lined sphinx moth).